A 306-amino-acid chain; its full sequence is Recombination-associated protein RdgC (306 aa).

The protein belongs to the RdgC family.

It is found in the cytoplasm. It localises to the nucleoid. Functionally, may be involved in recombination. This is Recombination-associated protein RdgC from Pseudomonas fluorescens (strain SBW25).